Consider the following 343-residue polypeptide: Phosphate acyltransferase (343 aa).

This sequence belongs to the PlsX family. In terms of assembly, homodimer. Probably interacts with PlsY.

The protein localises to the cytoplasm. It catalyses the reaction a fatty acyl-[ACP] + phosphate = an acyl phosphate + holo-[ACP]. The protein operates within lipid metabolism; phospholipid metabolism. Its function is as follows. Catalyzes the reversible formation of acyl-phosphate (acyl-PO(4)) from acyl-[acyl-carrier-protein] (acyl-ACP). This enzyme utilizes acyl-ACP as fatty acyl donor, but not acyl-CoA. This Coxiella burnetii (strain RSA 331 / Henzerling II) protein is Phosphate acyltransferase.